Here is a 316-residue protein sequence, read N- to C-terminus: Acetaldehyde dehydrogenase (316 aa).

NAD(+) is bound at residue 13-16 (SGNI). Cys-131 functions as the Acyl-thioester intermediate in the catalytic mechanism. Residues 162–170 (SAGPGTRAN) and Asn-290 each bind NAD(+).

Belongs to the acetaldehyde dehydrogenase family.

It carries out the reaction acetaldehyde + NAD(+) + CoA = acetyl-CoA + NADH + H(+). Catalyzes the conversion of acetaldehyde to acetyl-CoA, using NAD(+) and coenzyme A. Is the final enzyme in the meta-cleavage pathway for the degradation of 2-aminophenol. The protein is Acetaldehyde dehydrogenase (amnH) of Pseudomonas sp.